A 1173-amino-acid chain; its full sequence is Fas-binding factor 1 (1173 aa).

The tract at residues 17–168 (MALRTKKGLK…PSSSKTGLQY (152 aa)) is disordered. A compositionally biased stretch (basic and acidic residues) spans 46-56 (KPAEPASHAKD). Positions 80 to 93 (AGADAEASSVSDAD) are enriched in low complexity. The residue at position 172 (serine 172) is a Phosphoserine. 2 disordered regions span residues 180–225 (LAGL…GDTP) and 241–566 (TTLG…SSRE). Residues 206–216 (SPGAAAGQGPS) show a composition bias toward low complexity. Composition is skewed to basic and acidic residues over residues 247-258 (DSPKAERKKTGD) and 287-299 (TGER…DKKY). 4 stretches are compositionally biased toward polar residues: residues 331–345 (VASS…QSVS), 396–411 (SPVQ…MTPS), 468–477 (VISQKKSQNL), and 533–544 (TGSSMSWSQATT). 3 coiled-coil regions span residues 617–742 (TAQL…QQAS), 808–917 (QQRE…MNKC), and 975–1057 (CELR…VQRQ). Lysine 1002 participates in a covalent cross-link: Glycyl lysine isopeptide (Lys-Gly) (interchain with G-Cter in SUMO2). The tract at residues 1091-1124 (ASLPGLPPRVQGPAASSRDAVQAPASSSPQCSQP) is disordered. Over residues 1110 to 1124 (AVQAPASSSPQCSQP) the composition is skewed to low complexity.

As to quaternary structure, interacts with PARD3. May interact with FAS cytoplasmic domain. Interacts with TRAPPC14. As to expression, broadly expressed.

Its subcellular location is the cytoplasm. It localises to the cytoskeleton. It is found in the microtubule organizing center. The protein localises to the centrosome. The protein resides in the centriole. Its subcellular location is the spindle pole. It localises to the cell junction. Its function is as follows. Keratin-binding protein required for epithelial cell polarization. Involved in apical junction complex (AJC) assembly via its interaction with PARD3. Required for ciliogenesis. The polypeptide is Fas-binding factor 1 (Fbf1) (Mus musculus (Mouse)).